A 171-amino-acid polypeptide reads, in one-letter code: MLSKKQEFLEKKIEQRHGTKNKPAALQALKRKKRYEKQLAQIDGTLSTIEFQQQALENANTNTEVLKNMGSAAKAKKAAHDNMDIDKVDELMQDIADQQELGEEISTAISKPVGFGEKSDEDELMAELEELEQEEPDKNLLEVSGPETVPLPNVPSIALPSKPAKKRKTTT.

Over residues 1-17 (MLSKKQEFLEKKIEQRH) the composition is skewed to basic and acidic residues. Disordered regions lie at residues 1 to 24 (MLSK…NKPA) and 132 to 171 (EQEE…KTTT).

It belongs to the SNF7 family.

The polypeptide is Putative charged multivesicular body protein 4B-like protein CHMP4BP1 (CHMP4BP1) (Homo sapiens (Human)).